Here is a 508-residue protein sequence, read N- to C-terminus: MDPRARYPPGIGNGRGGNPNYYNRGPPLQQQHNHHQQQQTSAPHHQQYVQRQPQQHHHHNHHQQHQQQQQQWLRRNQIAREAAGTDRNSEPKAVAQSPAVDGIDSSSQDWKAQLKLPPQDTRYRTEDVTATKGNEFEDYFLKRELLMGIYEKGFERPSPIQEESIPIALTGSDILARAKNGTGKTAAFCIPALEKIDQEKNAIQVVILVPTRELALQTSQVCKELGKHLKIQVMVTTGGTSLKDDIIRLYQPVHLLVGTPGRILDLTKKGICILKDCSMLIMDEADKLLSPEFQPSVEQLIRYLPASRQILMFSATFPVTVKEFKDKYLPKPYVINLMDELTLKGITQFYAFVEERQKVHCLNTLFSKLQINQSIIFCNSVNRVELLAKKITELGYSCFYIHAKMLQDHRNRVFHDFRNGACRNLVCTDLFTRGIDIQAVNVVINFDFPKTAETYLHRVGRSGRFGHLGLAVNLITYEDRFNLYRIEQELGTEIKPIPPQIDQAIYCQ.

The tract at residues 1 to 123 is disordered; sequence MDPRARYPPG…LKLPPQDTRY (123 aa). Low complexity predominate over residues 18–53; the sequence is NPNYYNRGPPLQQQHNHHQQQQTSAPHHQQYVQRQP. The span at 54–64 shows a compositional bias: basic residues; that stretch reads QQHHHHNHHQQ. Residues 134-162 carry the Q motif motif; sequence NEFEDYFLKRELLMGIYEKGFERPSPIQE. Positions 165–335 constitute a Helicase ATP-binding domain; it reads IPIALTGSDI…DKYLPKPYVI (171 aa). Residue 178–185 participates in ATP binding; that stretch reads AKNGTGKT. Residues 283–286 carry the DEAD box motif; that stretch reads DEAD. Residues 345-505 form the Helicase C-terminal domain; that stretch reads GITQFYAFVE…PIPPQIDQAI (161 aa).

Belongs to the DEAD box helicase family. DDX6/DHH1 subfamily.

It localises to the cytoplasm. It is found in the P-body. The enzyme catalyses ATP + H2O = ADP + phosphate + H(+). Its function is as follows. ATP-dependent RNA helicase involved in mRNA turnover, and more specifically in mRNA decapping. This Oryza sativa subsp. japonica (Rice) protein is DEAD-box ATP-dependent RNA helicase 8.